The sequence spans 368 residues: Phosphate acyltransferase (368 aa).

The segment at V335–A368 is disordered. The segment covering P349 to A368 has biased composition (low complexity).

This sequence belongs to the PlsX family. In terms of assembly, homodimer. Probably interacts with PlsY.

Its subcellular location is the cytoplasm. The enzyme catalyses a fatty acyl-[ACP] + phosphate = an acyl phosphate + holo-[ACP]. Its pathway is lipid metabolism; phospholipid metabolism. In terms of biological role, catalyzes the reversible formation of acyl-phosphate (acyl-PO(4)) from acyl-[acyl-carrier-protein] (acyl-ACP). This enzyme utilizes acyl-ACP as fatty acyl donor, but not acyl-CoA. The protein is Phosphate acyltransferase of Burkholderia multivorans (strain ATCC 17616 / 249).